A 602-amino-acid polypeptide reads, in one-letter code: Glutaminase liver isoform, mitochondrial (602 aa).

Residues 1–14 (MRSMRALQNALSRA) constitute a mitochondrion transit peptide. Disordered regions lie at residues 1 to 29 (MRSMRALQNALSRAGSHGRRGGWGHPSRG) and 45 to 66 (AQGRGTPHSHQPQHSDHDASHS). Position 219 (serine 219) interacts with substrate. Lysine 253 is modified (N6-succinyllysine). Asparagine 268 provides a ligand contact to substrate. Residues lysine 279 and lysine 284 each carry the N6-acetyllysine modification. Substrate-binding residues include glutamate 314 and asparagine 321. Lysine 329 is modified (N6-acetyllysine). Substrate contacts are provided by tyrosine 347, tyrosine 399, and valine 417. ANK repeat units follow at residues 518–551 (DSRTALHVAAAEGHIEVVKFLIEACKVNPFVKDR) and 552–585 (WGNIPLDDAVQFNHLEVVKLLQDYHDSYLLSETQ).

The protein belongs to the glutaminase family. In terms of assembly, homotetramer, dimer of dimers. Does not assemble into higher oligomers. Interacts with the PDZ domain of the syntrophin SNTA1. Interacts with the PDZ domain of TAX1BP3.

The protein resides in the mitochondrion. It carries out the reaction L-glutamine + H2O = L-glutamate + NH4(+). Its activity is regulated as follows. Enzyme activity is not stimulated by phosphate. Phosphate increases kcat, but decreases substrate affinity, resulting in unchanged enzyme activity. Plays an important role in the regulation of glutamine catabolism. Promotes mitochondrial respiration and increases ATP generation in cells by catalyzing the synthesis of glutamate and alpha-ketoglutarate. Increases cellular anti-oxidant function via NADH and glutathione production. May play a role in preventing tumor proliferation. The chain is Glutaminase liver isoform, mitochondrial (Gls2) from Mus musculus (Mouse).